The sequence spans 454 residues: Gustatory and odorant receptor 21a (454 aa).

The Cytoplasmic portion of the chain corresponds to 1 to 114; it reads MTFLDRTMSF…LPRTGYSWGS (114 aa). The helical transmembrane segment at 115–135 threads the bilayer; that stretch reads KQVMWAIFIYSCQTTIVVLVL. Over 136-153 the chain is Extracellular; the sequence is RERVKKFVTSPDKRFDEA. The chain crosses the membrane as a helical span at residues 154–174; that stretch reads IYNVIFISLLFTNFLLPVASW. At 175-206 the chain is on the cytoplasmic side; the sequence is RHGPQVAIFKNMWTNYQYKFFKTTGSPIVFPN. Residues 207-227 traverse the membrane as a helical segment; sequence LYPLTWSLCVFSWLLSIAINL. The Extracellular portion of the chain corresponds to 228-237; sequence SQYFLQPDFR. Residues 238–258 form a helical membrane-spanning segment; sequence LWYTFAYYPIIAMLNCFCSLW. Over 259–312 the chain is Cytoplasmic; that stretch reads YINCNAFGTASRALSDALQTTIRGEKPAQKLTEYRHLWVDLSHMMQQLGRAYSN. A helical membrane pass occupies residues 313-333; it reads MYGMYCLVIFFTTIIATYGSI. Topologically, residues 334–345 are extracellular; it reads SEIIDHGATYKE. The chain crosses the membrane as a helical span at residues 346–366; the sequence is VGLFVIVFYCMGLLYIICNEA. The Cytoplasmic portion of the chain corresponds to 367–422; the sequence is HYASRKVGLDFQTKLLNINLTAVDAATQKEVEMLLVAINKNPPIMNLDGYANINRE. Residues 423 to 443 traverse the membrane as a helical segment; it reads LITTNISFMATYLVVLLQFKI. Residues 444–454 are Extracellular-facing; sequence TEQRRIGQQQA.

The protein belongs to the insect chemoreceptor superfamily. Gustatory receptor (GR) family. Gr21a subfamily. Gr21a and Gr63a probably form a heterodimer that responds to CO(2). As to expression, expressed in the adult labellar chemosensory neurons. Carbon dioxide-responsive neurons coexpress Gr21a and Gr63a in a pair of chemosensory receptors at both larval and adult life stages. A single bilateral neuron, expressing the Gr21a receptor, is responsible for CO(2) detection in larvae.

It localises to the cell membrane. Functionally, gustatory and odorant receptor which mediates acceptance or avoidance behavior, depending on its substrates. Gr21a and Gr63a together are sufficient for carbon dioxide detection and avoidance behavior. It is possible that the CO(2) receptors Gr63a and Gr21a activate the TRPC channels through Galpha49B and Plc21C. This innate olfactory avoidance behavior can be inhibited by inhibitory interactions of the odors such as 1-hexanol and 2,3-butanedione with Gr21a and Gr63a. This is Gustatory and odorant receptor 21a (Gr21a) from Drosophila melanogaster (Fruit fly).